The chain runs to 326 residues: Tagatose 1,6-diphosphate aldolase (326 aa).

Belongs to the aldolase LacD family.

The catalysed reaction is D-tagatofuranose 1,6-bisphosphate = D-glyceraldehyde 3-phosphate + dihydroxyacetone phosphate. Its pathway is carbohydrate metabolism; D-tagatose 6-phosphate degradation; D-glyceraldehyde 3-phosphate and glycerone phosphate from D-tagatose 6-phosphate: step 2/2. The polypeptide is Tagatose 1,6-diphosphate aldolase (Staphylococcus aureus (strain Mu3 / ATCC 700698)).